The sequence spans 144 residues: Maximins 3/H11 type 2 (144 aa).

The first 18 residues, 1–18 (MHFKYIVAVSFLIASAYA), serve as a signal peptide directing secretion. 2 consecutive propeptides follow at residues 19–43 (RSVQNDEQSLSQRDVLEEESLREIR) and 73–122 (RTAE…KKEK). Ile-143 carries the post-translational modification Isoleucine amide.

It belongs to the bombinin family. In terms of tissue distribution, expressed by the skin glands.

It localises to the secreted. Maximin-3 shows antibacterial activity against both Gram-positive and Gram-negative bacteria. It also shows antimicrobial activity against the fungus C.albicans, but not against A.flavus nor P.uticale. It has little hemolytic activity. It possess a significant cytotoxicity against tumor cell lines. It possess a significant anti-HIV activity. It shows high spermicidal activity. Its function is as follows. Maximin-H11 shows antimicrobial activity against bacteria and against the fungus C.albicans. Shows strong hemolytic activity. This Bombina maxima (Giant fire-bellied toad) protein is Maximins 3/H11 type 2.